Reading from the N-terminus, the 231-residue chain is Ion-translocating oxidoreductase complex subunit E (231 aa).

Helical transmembrane passes span 18–38 (ALVQ…ATNA), 39–59 (LGLG…ISTL), 63–83 (TPAE…VSAV), 86–106 (LINA…PLIV), 125–145 (ALSA…MFVL), and 182–202 (PFLL…MLAG).

This sequence belongs to the NqrDE/RnfAE family. The complex is composed of six subunits: RsxA, RsxB, RsxC, RsxD, RsxE and RsxG.

Its subcellular location is the cell inner membrane. Functionally, part of a membrane-bound complex that couples electron transfer with translocation of ions across the membrane. Required to maintain the reduced state of SoxR. In Escherichia coli (strain ATCC 8739 / DSM 1576 / NBRC 3972 / NCIMB 8545 / WDCM 00012 / Crooks), this protein is Ion-translocating oxidoreductase complex subunit E.